We begin with the raw amino-acid sequence, 91 residues long: UPF0358 protein SAB0977 (91 aa).

It belongs to the UPF0358 family.

The protein is UPF0358 protein SAB0977 of Staphylococcus aureus (strain bovine RF122 / ET3-1).